A 113-amino-acid chain; its full sequence is U11-theraphotoxin-Hhn1a (113 aa).

The N-terminal stretch at 1–21 (MNTVRVTFLLVFVLAVSLGQA) is a signal peptide. Positions 22-74 (DKDENRMEMQEKTEQGESYLDFAENLLLQKLEELEAKLLEEDSEESRNSRQKR) are excised as a propeptide. 3 cysteine pairs are disulfide-bonded: C75/C90, C82/C95, and C89/C110.

It belongs to the neurotoxin 14 (magi-1) family. 01 (HNTX-16) subfamily. In terms of tissue distribution, expressed by the venom gland.

It is found in the secreted. Functionally, probable ion channel inhibitor. This is U11-theraphotoxin-Hhn1a from Cyriopagopus hainanus (Chinese bird spider).